Here is a 369-residue protein sequence, read N- to C-terminus: Anhydro-N-acetylmuramic acid kinase (369 aa).

Residue 12-19 coordinates ATP; it reads GTSMDGVD.

It belongs to the anhydro-N-acetylmuramic acid kinase family.

The catalysed reaction is 1,6-anhydro-N-acetyl-beta-muramate + ATP + H2O = N-acetyl-D-muramate 6-phosphate + ADP + H(+). The protein operates within amino-sugar metabolism; 1,6-anhydro-N-acetylmuramate degradation. Its pathway is cell wall biogenesis; peptidoglycan recycling. Catalyzes the specific phosphorylation of 1,6-anhydro-N-acetylmuramic acid (anhMurNAc) with the simultaneous cleavage of the 1,6-anhydro ring, generating MurNAc-6-P. Is required for the utilization of anhMurNAc either imported from the medium or derived from its own cell wall murein, and thus plays a role in cell wall recycling. The protein is Anhydro-N-acetylmuramic acid kinase of Shewanella amazonensis (strain ATCC BAA-1098 / SB2B).